Reading from the N-terminus, the 1203-residue chain is Cation-transporting ATPase catp-5 (1203 aa).

Over 1–68 (MNTSEREPLL…YAYKETIGRQ (68 aa)) the chain is Cytoplasmic. A disordered region spans residues 21–42 (TTDNPSTKIMKREKDNPKAKTT). The helical transmembrane segment at 69–89 (ILFWLLTIVTLGFYQLLAYWV) threads the bilayer. Topologically, residues 90 to 209 (KSLFVKVRFQ…RKIYNMNALA (120 aa)) are extracellular. The chain crosses the membrane as a helical span at residues 210 to 230 (LALTPILVILFKEVLGPFYLF). The Cytoplasmic segment spans residues 231 to 242 (QCFSVALWYSDN). A helical membrane pass occupies residues 243 to 263 (YAYYASVIVIITVGSAAVAVY). Topologically, residues 264–297 (QMRAQEKRIRNMVGDTISVIVRRDGHDITIDASE) are extracellular. Residues 298-318 (IVPMDILILPSNTFILPCDCL) traverse the membrane as a helical segment. The Cytoplasmic segment spans residues 319–414 (LMNGTVIVNE…KPQEKEALKD (96 aa)). Residues 415–435 (VMVFILVLGFIALIGFIYTVI) traverse the membrane as a helical segment. Topologically, residues 436–451 (EMVSRGESLKHIIIRS) are extracellular. Residues 452-472 (LDIITIVVPPALPAAMSVGII) traverse the membrane as a helical segment. The Cytoplasmic portion of the chain corresponds to 473 to 935 (NANSRLKKKK…KEGRCALVTS (463 aa)). The active-site 4-aspartylphosphate intermediate is the Asp-503. Residues 595–617 (ETQDFDTVQPTVLRPPPEQATYH) form a disordered region. Mg(2+)-binding residues include Asp-883 and Asp-887. The helical transmembrane segment at 936-956 (YAVSKYMAAYSLNEFLSVMLL) threads the bilayer. Topologically, residues 957–962 (YNDGTN) are extracellular. A helical membrane pass occupies residues 963 to 983 (ISDGQFLYIDLVLITLVALFL). Residues 984–1007 (GNTEASRKLSGIPPPRRLATSAFY) lie on the Cytoplasmic side of the membrane. A helical transmembrane segment spans residues 1008–1028 (FSVFGQMFFNIITQTTGYLLV). At 1029–1046 (RGQSWYVPNPEELDNTTT) the chain is on the extracellular side. Residues 1047 to 1067 (MIGTTVFFTSCCMYLGYAFVY) traverse the membrane as a helical segment. The Cytoplasmic segment spans residues 1068–1085 (SKGHPYRRSVFTNWLLCG). A helical membrane pass occupies residues 1086 to 1106 (IIFVIGAINMVMIFTNMGFLM). The Extracellular portion of the chain corresponds to 1107 to 1120 (NLMGFVYVPSTSMR). The chain crosses the membrane as a helical span at residues 1121–1141 (FILLAISLAGVFLSLLYEHFF). Over 1142-1203 (VEKVVAIHFE…DRKETIESKC (62 aa)) the chain is Cytoplasmic.

The protein belongs to the cation transport ATPase (P-type) (TC 3.A.3) family. Type V subfamily. Expressed in the 20 intestinal cells and in the excretory cell.

It localises to the apical cell membrane. The enzyme catalyses ATP + H2O = ADP + phosphate + H(+). Functionally, involved in the uptake and/or transport of polyamines, probably through ATP hydrolysis. This contributes to the maintenance of intracellular polyamine levels. Polyamines are essential for cell proliferation and are implicated in cellular processes, ranging from DNA replication to apoptosis. This chain is Cation-transporting ATPase catp-5, found in Caenorhabditis elegans.